A 602-amino-acid chain; its full sequence is Elongation factor 4 (602 aa).

Residues 5–187 (DHIRNFAIIA…QIIVSLPAPE (183 aa)) form the tr-type G domain. Residues 17 to 22 (DHGKST) and 134 to 137 (NKVD) each bind GTP.

This sequence belongs to the TRAFAC class translation factor GTPase superfamily. Classic translation factor GTPase family. LepA subfamily.

It is found in the cell inner membrane. The catalysed reaction is GTP + H2O = GDP + phosphate + H(+). Functionally, required for accurate and efficient protein synthesis under certain stress conditions. May act as a fidelity factor of the translation reaction, by catalyzing a one-codon backward translocation of tRNAs on improperly translocated ribosomes. Back-translocation proceeds from a post-translocation (POST) complex to a pre-translocation (PRE) complex, thus giving elongation factor G a second chance to translocate the tRNAs correctly. Binds to ribosomes in a GTP-dependent manner. This Pelagibacter ubique (strain HTCC1062) protein is Elongation factor 4.